Consider the following 331-residue polypeptide: Biotin synthase (331 aa).

The Radical SAM core domain occupies Ser-39 to Ala-264. Positions 54, 58, and 61 each coordinate [4Fe-4S] cluster. Cys-98, Cys-130, Cys-190, and Arg-262 together coordinate [2Fe-2S] cluster.

This sequence belongs to the radical SAM superfamily. Biotin synthase family. In terms of assembly, homodimer. The cofactor is [4Fe-4S] cluster. Requires [2Fe-2S] cluster as cofactor.

It carries out the reaction (4R,5S)-dethiobiotin + (sulfur carrier)-SH + 2 reduced [2Fe-2S]-[ferredoxin] + 2 S-adenosyl-L-methionine = (sulfur carrier)-H + biotin + 2 5'-deoxyadenosine + 2 L-methionine + 2 oxidized [2Fe-2S]-[ferredoxin]. It participates in cofactor biosynthesis; biotin biosynthesis; biotin from 7,8-diaminononanoate: step 2/2. Catalyzes the conversion of dethiobiotin (DTB) to biotin by the insertion of a sulfur atom into dethiobiotin via a radical-based mechanism. This Chlamydia abortus (strain DSM 27085 / S26/3) (Chlamydophila abortus) protein is Biotin synthase.